Reading from the N-terminus, the 221-residue chain is ATP synthase subunit a 1 (221 aa).

Helical transmembrane passes span 20-40, 78-98, 108-128, 174-194, and 196-216; these read LTIV…ALIT, YLPF…CTVI, LSTT…FGIA, MILV…MNIL, and LLTG…YIAA.

This sequence belongs to the ATPase A chain family. As to quaternary structure, F-type ATPases have 2 components, CF(1) - the catalytic core - and CF(0) - the membrane proton channel. CF(1) has five subunits: alpha(3), beta(3), gamma(1), delta(1), epsilon(1). CF(0) has four main subunits: a, b, b' and c.

The protein localises to the cell inner membrane. Functionally, key component of the proton channel; it plays a direct role in the translocation of protons across the membrane. This chain is ATP synthase subunit a 1, found in Chlorobaculum tepidum (strain ATCC 49652 / DSM 12025 / NBRC 103806 / TLS) (Chlorobium tepidum).